Reading from the N-terminus, the 314-residue chain is tRNA-cytidine(32) 2-sulfurtransferase (314 aa).

The PP-loop motif motif lies at 57–62 (SGGKDS). 3 residues coordinate [4Fe-4S] cluster: cysteine 132, cysteine 135, and cysteine 223.

Belongs to the TtcA family. In terms of assembly, homodimer. Mg(2+) is required as a cofactor. Requires [4Fe-4S] cluster as cofactor.

The protein resides in the cytoplasm. It catalyses the reaction cytidine(32) in tRNA + S-sulfanyl-L-cysteinyl-[cysteine desulfurase] + AH2 + ATP = 2-thiocytidine(32) in tRNA + L-cysteinyl-[cysteine desulfurase] + A + AMP + diphosphate + H(+). Its pathway is tRNA modification. Its function is as follows. Catalyzes the ATP-dependent 2-thiolation of cytidine in position 32 of tRNA, to form 2-thiocytidine (s(2)C32). The sulfur atoms are provided by the cysteine/cysteine desulfurase (IscS) system. This chain is tRNA-cytidine(32) 2-sulfurtransferase, found in Alkalilimnicola ehrlichii (strain ATCC BAA-1101 / DSM 17681 / MLHE-1).